Here is a 95-residue protein sequence, read N- to C-terminus: Co-chaperonin GroES (95 aa).

Belongs to the GroES chaperonin family. In terms of assembly, heptamer of 7 subunits arranged in a ring. Interacts with the chaperonin GroEL.

The protein localises to the cytoplasm. In terms of biological role, together with the chaperonin GroEL, plays an essential role in assisting protein folding. The GroEL-GroES system forms a nano-cage that allows encapsulation of the non-native substrate proteins and provides a physical environment optimized to promote and accelerate protein folding. GroES binds to the apical surface of the GroEL ring, thereby capping the opening of the GroEL channel. The sequence is that of Co-chaperonin GroES from Ruegeria pomeroyi (strain ATCC 700808 / DSM 15171 / DSS-3) (Silicibacter pomeroyi).